A 486-amino-acid chain; its full sequence is mRNA cap guanine-N(7) methyltransferase (486 aa).

A disordered region spans residues methionine 1 to alanine 92. Composition is skewed to basic and acidic residues over residues glutamate 9–histidine 28, valine 35–arginine 54, and glutamate 82–alanine 92. An mRNA cap 0 methyltransferase domain is found at serine 135–valine 486. Asparagine 144 to asparagine 145 lines the mRNA pocket. Residues lysine 148, glycine 177, aspartate 201, aspartate 247, methionine 281–cysteine 283, and tyrosine 286 each bind S-adenosyl-L-methionine. Basic and acidic residues predominate over residues valine 333–glycine 351. The segment at valine 333–glutamate 365 is disordered. Acidic residues predominate over residues glycine 352–glutamate 363.

This sequence belongs to the class I-like SAM-binding methyltransferase superfamily. mRNA cap 0 methyltransferase family.

It localises to the nucleus. It carries out the reaction a 5'-end (5'-triphosphoguanosine)-ribonucleoside in mRNA + S-adenosyl-L-methionine = a 5'-end (N(7)-methyl 5'-triphosphoguanosine)-ribonucleoside in mRNA + S-adenosyl-L-homocysteine. Functionally, responsible for methylating the 5'-cap structure of mRNAs. This chain is mRNA cap guanine-N(7) methyltransferase (ABD1), found in Pyricularia oryzae (strain 70-15 / ATCC MYA-4617 / FGSC 8958) (Rice blast fungus).